A 185-amino-acid polypeptide reads, in one-letter code: Ribosome-recycling factor (185 aa).

It belongs to the RRF family.

The protein resides in the cytoplasm. Functionally, responsible for the release of ribosomes from messenger RNA at the termination of protein biosynthesis. May increase the efficiency of translation by recycling ribosomes from one round of translation to another. The chain is Ribosome-recycling factor from Pseudomonas savastanoi pv. phaseolicola (strain 1448A / Race 6) (Pseudomonas syringae pv. phaseolicola (strain 1448A / Race 6)).